Consider the following 170-residue polypeptide: Probable chemoreceptor glutamine deamidase CheD 3 (170 aa).

This sequence belongs to the CheD family.

The enzyme catalyses L-glutaminyl-[protein] + H2O = L-glutamyl-[protein] + NH4(+). In terms of biological role, probably deamidates glutamine residues to glutamate on methyl-accepting chemotaxis receptors (MCPs), playing an important role in chemotaxis. The polypeptide is Probable chemoreceptor glutamine deamidase CheD 3 (Dechloromonas aromatica (strain RCB)).